A 211-amino-acid polypeptide reads, in one-letter code: 2,3-bisphosphoglycerate-dependent phosphoglycerate mutase (211 aa).

Residues 9 to 16 (RHGQSDWN), 22 to 23 (TG), Arg61, 88 to 91 (ERDY), Lys99, 115 to 116 (RR), and 159 to 160 (GN) contribute to the substrate site. Residue His10 is the Tele-phosphohistidine intermediate of the active site. Glu88 acts as the Proton donor/acceptor in catalysis.

The protein belongs to the phosphoglycerate mutase family. BPG-dependent PGAM subfamily. Homodimer.

It catalyses the reaction (2R)-2-phosphoglycerate = (2R)-3-phosphoglycerate. It participates in carbohydrate degradation; glycolysis; pyruvate from D-glyceraldehyde 3-phosphate: step 3/5. In terms of biological role, catalyzes the interconversion of 2-phosphoglycerate and 3-phosphoglycerate. This is 2,3-bisphosphoglycerate-dependent phosphoglycerate mutase from Allorhizobium ampelinum (strain ATCC BAA-846 / DSM 112012 / S4) (Agrobacterium vitis (strain S4)).